Reading from the N-terminus, the 347-residue chain is MKPLQQIHLTCRRIIRDVLQHKSFLPAFISTSCTCLSRKKKHNGYDEVNQAKYEGLVRTVTASRISPQTPDRLFEEDNFLFGKVVKSKTATQTPEPKAPQNWVPLSNPNKVSLPLEKTDFDLPLKISLPARNHMANGTIPSVTRILQQTMPMEQAFYLERWKQRMIMELGEQGFAEYTAALFSQGKQFHMQLEDLLLALDHGKKEEPEGSTGYLSSVQHVLTDIIGVKSLESAVHHSELQYLGLVDCVAEYRQKLCVIDWKTSEKPKPYIRDTFDNPLQIAAYIGAINHDNNYNFQVNCGLIVVAYKDGSPAHTHFMDTDLCLHFWNKWLLRLEEYKKKKEEKEKQQ.

Catalysis depends on residues D246, D259, and K261.

Belongs to the MGME1 family.

The protein resides in the mitochondrion. Functionally, single-stranded DNA (ssDNA) metal-dependent exonuclease involved in mitochondrial genome maintenance. Has preference for 5'-3' exonuclease activity. Necessary for maintenance of proper 7S DNA levels. Probably involved in mitochondrial DNA (mtDNA) repair. Specifically binds 5-hydroxymethylcytosine (5hmC)-containing DNA in stem cells. This chain is Mitochondrial genome maintenance exonuclease 1 (mgme1), found in Xenopus tropicalis (Western clawed frog).